Consider the following 200-residue polypeptide: Early E1A 21 kDa protein (200 aa).

Positions 78–98 are disordered; it reads QDSTTATSAEEPSASTDSISS. The LXCXE motif, interaction with host RB1 motif lies at 114 to 118; it reads LRCYE. The segment at 136 to 151 is a zinc-finger region; sequence CSTCGGHEVNGFCSLC. The Nuclear localization signal motif lies at 196 to 200; the sequence is SRHDE.

As to quaternary structure, interaction with host RB1 induces the aberrant dissociation of RB1-E2F1 complex thereby disrupting RB1's activity.

Its function is as follows. E1A protein has both transforming and trans-activating activities. Plays a role in viral genome replication by driving entry of quiescent cells into the cell cycle. Disrupts the function of host retinoblastoma protein RB1/pRb and isoform early E1A 26 kDa protein stabilizes TP53, which are key regulators of the cell cycle. Induces the disassembly of the E2F1 transcription factors from RB1 by direct competition for the same binding site on RB1, with subsequent transcriptional activation of E2F1-regulated S-phase genes. Inactivation of the ability of RB1 to arrest the cell cycle is critical for cellular transformation, uncontrolled cellular growth and proliferation induced by viral infection. Stimulation of progression from G1 to S phase allows the virus to efficiently use the cellular DNA replicating machinery to achieve viral genome replication. The chain is Early E1A 21 kDa protein from Murine adenovirus A serotype 1 (MAdV-1).